The following is a 222-amino-acid chain: Leucyl/phenylalanyl-tRNA--protein transferase (222 aa).

This sequence belongs to the L/F-transferase family.

It is found in the cytoplasm. The catalysed reaction is N-terminal L-lysyl-[protein] + L-leucyl-tRNA(Leu) = N-terminal L-leucyl-L-lysyl-[protein] + tRNA(Leu) + H(+). The enzyme catalyses N-terminal L-arginyl-[protein] + L-leucyl-tRNA(Leu) = N-terminal L-leucyl-L-arginyl-[protein] + tRNA(Leu) + H(+). It catalyses the reaction L-phenylalanyl-tRNA(Phe) + an N-terminal L-alpha-aminoacyl-[protein] = an N-terminal L-phenylalanyl-L-alpha-aminoacyl-[protein] + tRNA(Phe). In terms of biological role, functions in the N-end rule pathway of protein degradation where it conjugates Leu, Phe and, less efficiently, Met from aminoacyl-tRNAs to the N-termini of proteins containing an N-terminal arginine or lysine. This Legionella pneumophila (strain Paris) protein is Leucyl/phenylalanyl-tRNA--protein transferase.